The following is a 121-amino-acid chain: Basic phospholipase A2 BmjeTX-II (121 aa).

7 cysteine pairs are disulfide-bonded: Cys26/Cys114, Cys28/Cys45, Cys44/Cys95, Cys50/Cys121, Cys51/Cys88, Cys58/Cys82, and Cys76/Cys86. Residues Tyr27, Gly29, and Gly31 each coordinate Ca(2+). His48 is an active-site residue. Asp49 provides a ligand contact to Ca(2+). Asp89 is an active-site residue.

Ca(2+) is required as a cofactor. Expressed by the venom gland.

Its subcellular location is the secreted. The enzyme catalyses a 1,2-diacyl-sn-glycero-3-phosphocholine + H2O = a 1-acyl-sn-glycero-3-phosphocholine + a fatty acid + H(+). Functionally, snake venom phospholipase A2 (PLA2) that induces blockade of neuromuscular contraction in an indirectly stimulated chick biventer cervicis nerve-muscle preparation. Does not inhibit contraction of chick biventer cervicic nerve-muscle preparation in response to treatment with acetylcholine or KCl. The neuromuscular blockade is mediated by inhibitory action at the presynaptic motor nerve endings. Lyses skeletal myoblasts and myotubes in vitro, and intramuscular injection causes local muscle necrosis. Induces edema in the mouse foot pad. Induces a transient increase of IL-6 levels. PLA2 catalyzes the calcium-dependent hydrolysis of the 2-acyl groups in 3-sn-phosphoglycerides. This Bothrops marajoensis (Marajo lancehead) protein is Basic phospholipase A2 BmjeTX-II.